Consider the following 119-residue polypeptide: Dihydroneopterin aldolase (119 aa).

Substrate is bound by residues Glu-21, Tyr-53, and 72–73; that span reads VE. Catalysis depends on Lys-98, which acts as the Proton donor/acceptor.

It belongs to the DHNA family.

The enzyme catalyses 7,8-dihydroneopterin = 6-hydroxymethyl-7,8-dihydropterin + glycolaldehyde. It functions in the pathway cofactor biosynthesis; tetrahydrofolate biosynthesis; 2-amino-4-hydroxy-6-hydroxymethyl-7,8-dihydropteridine diphosphate from 7,8-dihydroneopterin triphosphate: step 3/4. Functionally, catalyzes the conversion of 7,8-dihydroneopterin to 6-hydroxymethyl-7,8-dihydropterin. In Streptomyces coelicolor (strain ATCC BAA-471 / A3(2) / M145), this protein is Dihydroneopterin aldolase (folB).